The sequence spans 238 residues: Ribonuclease PH (238 aa).

Residues R86 and 124–126 (GTR) each bind phosphate.

Belongs to the RNase PH family. In terms of assembly, homohexameric ring arranged as a trimer of dimers.

It carries out the reaction tRNA(n+1) + phosphate = tRNA(n) + a ribonucleoside 5'-diphosphate. Functionally, phosphorolytic 3'-5' exoribonuclease that plays an important role in tRNA 3'-end maturation. Removes nucleotide residues following the 3'-CCA terminus of tRNAs; can also add nucleotides to the ends of RNA molecules by using nucleoside diphosphates as substrates, but this may not be physiologically important. Probably plays a role in initiation of 16S rRNA degradation (leading to ribosome degradation) during starvation. This is Ribonuclease PH from Photobacterium profundum (strain SS9).